Reading from the N-terminus, the 95-residue chain is Exodeoxyribonuclease 7 small subunit (95 aa).

The disordered stretch occupies residues 65 to 95; that stretch reads ETINPAETARPAKPENAPESPRMNDLFGTES.

It belongs to the XseB family. In terms of assembly, heterooligomer composed of large and small subunits.

It localises to the cytoplasm. The enzyme catalyses Exonucleolytic cleavage in either 5'- to 3'- or 3'- to 5'-direction to yield nucleoside 5'-phosphates.. Functionally, bidirectionally degrades single-stranded DNA into large acid-insoluble oligonucleotides, which are then degraded further into small acid-soluble oligonucleotides. In Chlorobaculum tepidum (strain ATCC 49652 / DSM 12025 / NBRC 103806 / TLS) (Chlorobium tepidum), this protein is Exodeoxyribonuclease 7 small subunit.